The primary structure comprises 32 residues: Cytochrome b6-f complex subunit 8 (32 aa).

A helical transmembrane segment spans residues 6 to 26; sequence IVSLAWAALMVVFTFSLSLVV.

The protein belongs to the PetN family. In terms of assembly, the 4 large subunits of the cytochrome b6-f complex are cytochrome b6, subunit IV (17 kDa polypeptide, PetD), cytochrome f and the Rieske protein, while the 4 small subunits are PetG, PetL, PetM and PetN. The complex functions as a dimer.

Its subcellular location is the plastid. The protein localises to the chloroplast thylakoid membrane. Functionally, component of the cytochrome b6-f complex, which mediates electron transfer between photosystem II (PSII) and photosystem I (PSI), cyclic electron flow around PSI, and state transitions. The polypeptide is Cytochrome b6-f complex subunit 8 (Illicium oligandrum (Star anise)).